A 182-amino-acid chain; its full sequence is uncharacterized protein (182 aa).

A run of 2 helical transmembrane segments spans residues 58–78 (ILFG…YVVY) and 81–101 (PVSI…IIIW).

To M.jannaschii MJ0803.

It localises to the cell membrane. This is an uncharacterized protein from Methanocaldococcus jannaschii (strain ATCC 43067 / DSM 2661 / JAL-1 / JCM 10045 / NBRC 100440) (Methanococcus jannaschii).